The following is a 415-amino-acid chain: MADQQPEKTTAPATDVADSQPAVVTSTDTRKETTETAEPLPEDKTETTTAQPAVETTATQSGTAETPAEVQQPPQAEEEKPVAQQPEQPAYLAKNPALAQFFERLPAIVSSSGHAEMWGVPLKDSNDAPTVNVLIKFLRANEGNVKLAEGQLTKALKWRKEMNPSALAESTSYSATKFGGLGYLTVYKEANGAENVVTWNIYGGVKDINTTFGDMDEFVKWRVALMELAVKELKMAEATSVIDYDGEDPYQMIQVHDYQNVSFLRLNPAIKAATKKTIEVFTTAYPELLREKFFVNVPAIMGWMFAAMKVFLSKNTTRKFHPISNGANLAREFPSLKDQFPKVYGGSAPALQEGARTVNLSQDESAPAAPEQSKEQTKENKEEAAQEESKPESAPEQPKADPAVTAQEAPAADAK.

The tract at residues 1–87 is disordered; that stretch reads MADQQPEKTT…EEKPVAQQPE (87 aa). Positions 47–63 are enriched in polar residues; it reads TTTAQPAVETTATQSGT. A compositionally biased stretch (low complexity) spans 64–75; the sequence is AETPAEVQQPPQ. A CRAL-TRIO domain is found at 177-352; it reads KFGGLGYLTV…VYGGSAPALQ (176 aa). Heme is bound by residues Y202, R222, H256, Y258, and K292. The tract at residues 358-415 is disordered; it reads VNLSQDESAPAAPEQSKEQTKENKEEAAQEESKPESAPEQPKADPAVTAQEAPAADAK. Basic and acidic residues predominate over residues 372–393; the sequence is QSKEQTKENKEEAAQEESKPES.

The protein belongs to the SFH5 family. The cofactor is heme b.

The protein resides in the cytoplasm. It is found in the endoplasmic reticulum membrane. It localises to the microsome membrane. It carries out the reaction a 1,2-diacyl-sn-glycero-3-phospho-(1D-myo-inositol)(in) = a 1,2-diacyl-sn-glycero-3-phospho-(1D-myo-inositol)(out). In terms of biological role, non-classical phosphatidylinositol (PtdIns) transfer protein (PITP), which exhibits PtdIns-binding/transfer activity in the absence of detectable PtdCho-binding/transfer activity. Regulates PtdIns(4,5)P2 homeostasis at the plasma membrane. Heme-binding protein that may play a role in organic oxidant-induced stress responses. The polypeptide is Phosphatidylinositol transfer protein sfh5 (sfh5) (Neosartorya fischeri (strain ATCC 1020 / DSM 3700 / CBS 544.65 / FGSC A1164 / JCM 1740 / NRRL 181 / WB 181) (Aspergillus fischerianus)).